Here is a 166-residue protein sequence, read N- to C-terminus: Small ribosomal subunit protein uS5 (166 aa).

The S5 DRBM domain occupies 12 to 75; sequence YIEKLVQVNR…EAARRNMIQV (64 aa).

The protein belongs to the universal ribosomal protein uS5 family. Part of the 30S ribosomal subunit. Contacts proteins S4 and S8.

Functionally, with S4 and S12 plays an important role in translational accuracy. Its function is as follows. Located at the back of the 30S subunit body where it stabilizes the conformation of the head with respect to the body. This Pseudomonas aeruginosa (strain LESB58) protein is Small ribosomal subunit protein uS5.